The chain runs to 222 residues: Chalcone--flavanone isomerase 1 (222 aa).

Thr-48, Asn-113, and Thr-190 together coordinate substrate.

This sequence belongs to the chalcone isomerase family.

The catalysed reaction is a chalcone = a flavanone.. It participates in secondary metabolite biosynthesis; flavonoid biosynthesis. In terms of biological role, catalyzes the intramolecular cyclization of bicyclic chalcones into tricyclic (S)-flavanones. Responsible for the isomerization of 4,2',4',6'-tetrahydroxychalcone (also termed chalcone) into naringenin. The protein is Chalcone--flavanone isomerase 1 (CHI1) of Medicago sativa (Alfalfa).